The sequence spans 305 residues: UDP-3-O-acyl-N-acetylglucosamine deacetylase (305 aa).

H79, H238, and D242 together coordinate Zn(2+). H265 acts as the Proton donor in catalysis.

This sequence belongs to the LpxC family. Zn(2+) serves as cofactor.

The enzyme catalyses a UDP-3-O-[(3R)-3-hydroxyacyl]-N-acetyl-alpha-D-glucosamine + H2O = a UDP-3-O-[(3R)-3-hydroxyacyl]-alpha-D-glucosamine + acetate. It participates in glycolipid biosynthesis; lipid IV(A) biosynthesis; lipid IV(A) from (3R)-3-hydroxytetradecanoyl-[acyl-carrier-protein] and UDP-N-acetyl-alpha-D-glucosamine: step 2/6. In terms of biological role, catalyzes the hydrolysis of UDP-3-O-myristoyl-N-acetylglucosamine to form UDP-3-O-myristoylglucosamine and acetate, the committed step in lipid A biosynthesis. This is UDP-3-O-acyl-N-acetylglucosamine deacetylase from Mannheimia succiniciproducens (strain KCTC 0769BP / MBEL55E).